The sequence spans 160 residues: Ureidoglycolate lyase (160 aa).

This sequence belongs to the ureidoglycolate lyase family. In terms of assembly, homodimer. The cofactor is Ni(2+).

The catalysed reaction is (S)-ureidoglycolate = urea + glyoxylate. The protein operates within nitrogen metabolism; (S)-allantoin degradation. Catalyzes the catabolism of the allantoin degradation intermediate (S)-ureidoglycolate, generating urea and glyoxylate. Involved in the anaerobic utilization of allantoin as sole nitrogen source. Reinforces the induction of genes involved in the degradation of allantoin and glyoxylate by producing glyoxylate. This chain is Ureidoglycolate lyase, found in Escherichia coli O6:H1 (strain CFT073 / ATCC 700928 / UPEC).